The sequence spans 229 residues: Urease accessory protein UreF (229 aa).

This sequence belongs to the UreF family. As to quaternary structure, ureD, UreF and UreG form a complex that acts as a GTP-hydrolysis-dependent molecular chaperone, activating the urease apoprotein by helping to assemble the nickel containing metallocenter of UreC. The UreE protein probably delivers the nickel.

The protein resides in the cytoplasm. Its function is as follows. Required for maturation of urease via the functional incorporation of the urease nickel metallocenter. The polypeptide is Urease accessory protein UreF (Nostoc sp. (strain PCC 7120 / SAG 25.82 / UTEX 2576)).